The sequence spans 173 residues: MILSGKEILKNIGSNIIIEPFDEKKINPNSYNLSLHNELLVYENDILDMKTPNPTKVIKIPEDGLLLEPGKLYLGRTNEFTSTSKYVPMLEGRSSTGRLGLFIHVTAGFGDIGFSGYWTLEIFCVQPIKVYPNVEICQIYYHDIHGEYDLYSSGKYQNNKGIQPSLMYKDFEK.

DCTP is bound by residues 93 to 98 (RSSTGR), Asp111, 119 to 121 (TLE), Gln138, and Tyr151. Residue Glu121 is the Proton donor/acceptor of the active site.

The protein belongs to the dCTP deaminase family. In terms of assembly, homotrimer.

The catalysed reaction is dCTP + 2 H2O = dUMP + NH4(+) + diphosphate. The protein operates within pyrimidine metabolism; dUMP biosynthesis; dUMP from dCTP: step 1/1. In terms of biological role, bifunctional enzyme that catalyzes both the deamination of dCTP to dUTP and the hydrolysis of dUTP to dUMP without releasing the toxic dUTP intermediate. This chain is dCTP deaminase, dUMP-forming, found in Clostridium beijerinckii (strain ATCC 51743 / NCIMB 8052) (Clostridium acetobutylicum).